The sequence spans 466 residues: UDP-N-acetylmuramoylalanine--D-glutamate ligase (466 aa).

An ATP-binding site is contributed by 121-127; sequence GTNGKST.

The protein belongs to the MurCDEF family.

The protein localises to the cytoplasm. The catalysed reaction is UDP-N-acetyl-alpha-D-muramoyl-L-alanine + D-glutamate + ATP = UDP-N-acetyl-alpha-D-muramoyl-L-alanyl-D-glutamate + ADP + phosphate + H(+). The protein operates within cell wall biogenesis; peptidoglycan biosynthesis. Cell wall formation. Catalyzes the addition of glutamate to the nucleotide precursor UDP-N-acetylmuramoyl-L-alanine (UMA). The protein is UDP-N-acetylmuramoylalanine--D-glutamate ligase of Nitrobacter winogradskyi (strain ATCC 25391 / DSM 10237 / CIP 104748 / NCIMB 11846 / Nb-255).